Consider the following 485-residue polypeptide: NADH-quinone oxidoreductase subunit N (485 aa).

Transmembrane regions (helical) follow at residues 8–28, 35–55, 75–95, 105–125, 127–147, 159–179, 203–223, 235–255, 271–291, 297–317, 326–346, 374–394, 408–427, and 455–475; these read LIAL…MLSI, FLNA…LWFV, LYTG…YPWL, FYLL…ANHL, SLFL…GYAF, YTIL…LVYA, LLAG…LVPF, PAPV…GVVM, VVLG…ALTQ, LLGY…IALK, VGVY…VVSL, AVMT…GFIG, WWLT…YYLR, and VVVL…QPLI.

This sequence belongs to the complex I subunit 2 family. As to quaternary structure, NDH-1 is composed of 13 different subunits. Subunits NuoA, H, J, K, L, M, N constitute the membrane sector of the complex.

It is found in the cell inner membrane. It catalyses the reaction a quinone + NADH + 5 H(+)(in) = a quinol + NAD(+) + 4 H(+)(out). Functionally, NDH-1 shuttles electrons from NADH, via FMN and iron-sulfur (Fe-S) centers, to quinones in the respiratory chain. The immediate electron acceptor for the enzyme in this species is believed to be ubiquinone. Couples the redox reaction to proton translocation (for every two electrons transferred, four hydrogen ions are translocated across the cytoplasmic membrane), and thus conserves the redox energy in a proton gradient. This chain is NADH-quinone oxidoreductase subunit N, found in Cronobacter sakazakii (strain ATCC BAA-894) (Enterobacter sakazakii).